The sequence spans 536 residues: CTP synthase (536 aa).

The segment at 1–268 (MKSKFIFITG…GKVLCKLFNI (268 aa)) is amidoligase domain. Ser14 provides a ligand contact to CTP. Ser14 contacts UTP. 15 to 20 (SLGKGL) contributes to the ATP binding site. An L-glutamine-binding site is contributed by Tyr55. ATP is bound at residue Asp72. Mg(2+) contacts are provided by Asp72 and Glu142. Residues 149 to 151 (DIE), 189 to 194 (KTKPMQ), and Lys225 each bind CTP. UTP-binding positions include 189 to 194 (KTKPMQ) and Lys225. Positions 293–535 (TIALVGKYVE…IKAAVDNKIN (243 aa)) constitute a Glutamine amidotransferase type-1 domain. Gly356 lines the L-glutamine pocket. Cys383 acts as the Nucleophile; for glutamine hydrolysis in catalysis. Residues 384–387 (LGMQ), Glu407, and Arg463 each bind L-glutamine. Catalysis depends on residues His508 and Glu510.

The protein belongs to the CTP synthase family. In terms of assembly, homotetramer.

The enzyme catalyses UTP + L-glutamine + ATP + H2O = CTP + L-glutamate + ADP + phosphate + 2 H(+). The catalysed reaction is L-glutamine + H2O = L-glutamate + NH4(+). It carries out the reaction UTP + NH4(+) + ATP = CTP + ADP + phosphate + 2 H(+). The protein operates within pyrimidine metabolism; CTP biosynthesis via de novo pathway; CTP from UDP: step 2/2. Allosterically activated by GTP, when glutamine is the substrate; GTP has no effect on the reaction when ammonia is the substrate. The allosteric effector GTP functions by stabilizing the protein conformation that binds the tetrahedral intermediate(s) formed during glutamine hydrolysis. Inhibited by the product CTP, via allosteric rather than competitive inhibition. Its function is as follows. Catalyzes the ATP-dependent amination of UTP to CTP with either L-glutamine or ammonia as the source of nitrogen. Regulates intracellular CTP levels through interactions with the four ribonucleotide triphosphates. The polypeptide is CTP synthase (Treponema denticola (strain ATCC 35405 / DSM 14222 / CIP 103919 / JCM 8153 / KCTC 15104)).